The following is a 226-amino-acid chain: UPF0173 metal-dependent hydrolase Msed_2125 (226 aa).

The protein belongs to the UPF0173 family.

The chain is UPF0173 metal-dependent hydrolase Msed_2125 from Metallosphaera sedula (strain ATCC 51363 / DSM 5348 / JCM 9185 / NBRC 15509 / TH2).